We begin with the raw amino-acid sequence, 241 residues long: Small ribosomal subunit protein uS2 (241 aa).

The protein belongs to the universal ribosomal protein uS2 family.

The chain is Small ribosomal subunit protein uS2 from Escherichia coli O127:H6 (strain E2348/69 / EPEC).